Reading from the N-terminus, the 338-residue chain is P2Y purinoceptor 14 (338 aa).

The Extracellular segment spans residues 1-29 (MNNSTTTDPPNQPCSWNTLITKQIIPVLY). N-linked (GlcNAc...) asparagine glycosylation is found at N2 and N3. The helical transmembrane segment at 30-50 (GMVFITGLLLNGISGWIFFYV) threads the bilayer. Over 51–55 (PSSKS) the chain is Cytoplasmic. Residues 56-76 (FIIYLKNIVVADFLMGLTFPF) traverse the membrane as a helical segment. Over 77 to 96 (KVLGDSGLGPWQVNVFVCRV) the chain is Extracellular. C94 and C172 are joined by a disulfide. The helical transmembrane segment at 97–117 (SAVIFYVNMYVSIVFFGLISF) threads the bilayer. At 118–139 (DRYYKIVKPLLTSIVQSVNYSK) the chain is on the cytoplasmic side. Residues 140 to 160 (LLSVLVWMLMLLLAVPNIILT) traverse the membrane as a helical segment. Over 161–188 (NQGVKEVTKIQCMELKNELGRKWHKASN) the chain is Extracellular. A helical transmembrane segment spans residues 189–209 (YIFVSIFWVVFLLLIVFYTAI). Topologically, residues 210–234 (TRKIFKSHLKSRKNSTSVKRKSSRN) are cytoplasmic. Residues 235-255 (IFSIVLVFVVCFVPYHIARIP) traverse the membrane as a helical segment. Residues 256-278 (YTKSQTEGHYSCRTKETLLYAKE) are Extracellular-facing. The helical transmembrane segment at 279 to 299 (FTLLLSAANVCLDPIIYFFLC) threads the bilayer. The Cytoplasmic portion of the chain corresponds to 300 to 338 (QPFREVLNKKLHMSLKVQNDLEVSKTKRENAIHESTDTL).

The protein belongs to the G-protein coupled receptor 1 family.

Its subcellular location is the cell membrane. Its function is as follows. Receptor for UDP-glucose coupled to G-proteins. In Mus musculus (Mouse), this protein is P2Y purinoceptor 14 (P2ry14).